We begin with the raw amino-acid sequence, 393 residues long: Isocitrate dehydrogenase [NAD] subunit gamma, mitochondrial (393 aa).

The N-terminal 39 residues, 1–39, are a transit peptide targeting the mitochondrion; that stretch reads MALKVATVAGSAAKAVLGPALLCRPWEVLGAHEVPSRNI. Residues Thr120 and Asn133 each contribute to the citrate site. Arg136, Arg167, and Asp254 together coordinate substrate. Asp254 is a Mn(2+) binding site. The ADP site is built by Asn312, Thr313, and Asn324.

The protein belongs to the isocitrate and isopropylmalate dehydrogenases family. Heterooligomer of subunits alpha (IDH3A), beta (IDH3B), and gamma (IDH3G) in the apparent ratio of 2:1:1. The heterodimer containing one IDH3A and one IDH3B subunit and the heterodimer containing one IDH3A and one IDH3G subunit assemble into a heterotetramer (which contains two subunits of IDH3A, one of IDH3B and one of IDH3G) and further into the heterooctamer. It depends on Mg(2+) as a cofactor. Mn(2+) is required as a cofactor.

It is found in the mitochondrion. With respect to regulation, the heterotetramer and the heterodimer composed of IDH3A and IDH3G subunits can be allosterically activated by citrate (CIT) or/and ADP, and the two activators can act independently or synergistically. The heterodimer composed of IDH3A and IDH3B subunits cannot be allosterically regulated and the allosteric regulation of the heterotetramer is through the IDH3G subunit and not the IDH3B subunit. The IDH3G subunit contains the allosteric site which consists of a CIT-binding site and an ADP-binding site, and the binding of CIT and ADP causes conformational changes at the allosteric site which are transmitted to the active site in the catalytic subunit (IDH3A) through a cascade of conformational changes at the heterodimer interface, leading to stabilization of the isocitrate-binding at the active site and thus activation of the enzyme. ATP can activate the heterotetramer and the heterodimer composed of IDH3A and IDH3G subunits at low concentrations but inhibits their activities at high concentrations, whereas ATP exhibits only inhibitory effect on the heterodimer composed of IDH3A and IDH3B subunits. Functionally, regulatory subunit which plays a role in the allosteric regulation of the enzyme catalyzing the decarboxylation of isocitrate (ICT) into alpha-ketoglutarate. The heterodimer composed of the alpha (IDH3A) and beta (IDH3B) subunits and the heterodimer composed of the alpha (IDH3A) and gamma (IDH3G) subunits, have considerable basal activity but the full activity of the heterotetramer (containing two subunits of IDH3A, one of IDH3B and one of IDH3G) requires the assembly and cooperative function of both heterodimers. This Homo sapiens (Human) protein is Isocitrate dehydrogenase [NAD] subunit gamma, mitochondrial (IDH3G).